The following is an 88-amino-acid chain: Small ribosomal subunit protein uS17 (88 aa).

Belongs to the universal ribosomal protein uS17 family. Part of the 30S ribosomal subunit.

One of the primary rRNA binding proteins, it binds specifically to the 5'-end of 16S ribosomal RNA. The polypeptide is Small ribosomal subunit protein uS17 (Synechococcus sp. (strain CC9311)).